Here is a 259-residue protein sequence, read N- to C-terminus: 5'-nucleotidase SurE (259 aa).

Positions 8, 9, 41, and 99 each coordinate a divalent metal cation.

The protein belongs to the SurE nucleotidase family. A divalent metal cation is required as a cofactor.

The protein localises to the cytoplasm. The catalysed reaction is a ribonucleoside 5'-phosphate + H2O = a ribonucleoside + phosphate. Functionally, nucleotidase that shows phosphatase activity on nucleoside 5'-monophosphates. This Synechococcus sp. (strain JA-3-3Ab) (Cyanobacteria bacterium Yellowstone A-Prime) protein is 5'-nucleotidase SurE.